Here is an 81-residue protein sequence, read N- to C-terminus: Photosystem I iron-sulfur center (81 aa).

4Fe-4S ferredoxin-type domains are found at residues 2-31 (AHSV…MIPW) and 39-68 (IASA…VRVY). [4Fe-4S] cluster-binding residues include C11, C14, C17, C21, C48, C51, C54, and C58.

As to quaternary structure, the eukaryotic PSI reaction center is composed of at least 11 subunits. The cofactor is [4Fe-4S] cluster.

The protein localises to the plastid. It is found in the chloroplast thylakoid membrane. It catalyses the reaction reduced [plastocyanin] + hnu + oxidized [2Fe-2S]-[ferredoxin] = oxidized [plastocyanin] + reduced [2Fe-2S]-[ferredoxin]. In terms of biological role, apoprotein for the two 4Fe-4S centers FA and FB of photosystem I (PSI); essential for photochemical activity. FB is the terminal electron acceptor of PSI, donating electrons to ferredoxin. The C-terminus interacts with PsaA/B/D and helps assemble the protein into the PSI complex. Required for binding of PsaD and PsaE to PSI. PSI is a plastocyanin-ferredoxin oxidoreductase, converting photonic excitation into a charge separation, which transfers an electron from the donor P700 chlorophyll pair to the spectroscopically characterized acceptors A0, A1, FX, FA and FB in turn. The chain is Photosystem I iron-sulfur center from Psilotum nudum (Whisk fern).